The chain runs to 356 residues: Anthranilate phosphoribosyltransferase (356 aa).

5-phospho-alpha-D-ribose 1-diphosphate contacts are provided by residues Gly96, 99–100 (GD), Thr104, 106–109 (NIST), 124–132 (KHGNRSASG), and Ser136. Gly96 serves as a coordination point for anthranilate. Ser108 lines the Mg(2+) pocket. Asn127 is an anthranilate binding site. Arg182 lines the anthranilate pocket. Positions 241 and 242 each coordinate Mg(2+).

It belongs to the anthranilate phosphoribosyltransferase family. In terms of assembly, homodimer. Mg(2+) is required as a cofactor.

It carries out the reaction N-(5-phospho-beta-D-ribosyl)anthranilate + diphosphate = 5-phospho-alpha-D-ribose 1-diphosphate + anthranilate. It functions in the pathway amino-acid biosynthesis; L-tryptophan biosynthesis; L-tryptophan from chorismate: step 2/5. Catalyzes the transfer of the phosphoribosyl group of 5-phosphorylribose-1-pyrophosphate (PRPP) to anthranilate to yield N-(5'-phosphoribosyl)-anthranilate (PRA). The sequence is that of Anthranilate phosphoribosyltransferase from Trichodesmium erythraeum (strain IMS101).